The primary structure comprises 1183 residues: 3-hydroxy-3-methylglutaryl-coenzyme A reductase (1183 aa).

Over 1–245 (MAAILLPQRF…DLLKNAETLD (245 aa)) the chain is Cytoplasmic. In terms of domain architecture, SSD spans 245-426 (DIVIMLLGYI…FTFYTAILSI (182 aa)). Residues 246–266 (IVIMLLGYIAMHLTFVSLFLS) traverse the membrane as a helical segment. Topologically, residues 267–273 (MRKMGSK) are lumenal. The helical transmembrane segment at 274 to 294 (FWLGICTLFSSVFAFLFGLVV) threads the bilayer. Residues 295-299 (TTKLG) are Cytoplasmic-facing. A helical membrane pass occupies residues 300–320 (VPISVILLSEGLPFLVVTIGF). Residues 321–378 (EKNIVLTRAVMSHAIEHRRIQAQNSKSGKRSPERSTQNMIQYAVQAAIKEKGFEIIRD) are Lumenal-facing. Residues 379-399 (YAIEIVILVIGAASGVQGGLQ) form a helical membrane-spanning segment. Residues 400–402 (QFC) lie on the Cytoplasmic side of the membrane. Residues 403-423 (FLAAWTLFFDFILLFTFYTAI) form a helical membrane-spanning segment. The Lumenal segment spans residues 424–482 (LSIKLEINRIKRHVDMRMALEDDGVSRRVAENVAKGDDELNRVRGDAPLFGRKSSSIPK). The helical transmembrane segment at 483-503 (FKVLMILGFIFVNIVNICSIP) threads the bilayer. The Cytoplasmic segment spans residues 504 to 1183 (FRNPSSMSTI…SAAAIQRSKR (680 aa)). Glu-828 (charge relay system) is an active-site residue. Position 834–840 (834–840 (SASRGCK)) interacts with CoA. NADP(+)-binding positions include 895-897 (SRF) and 922-930 (DAMGMNMIS). The active-site Charge relay system is Lys-962. 991–993 (VLK) is a CoA binding site. Asp-1038 serves as the catalytic Charge relay system. Residue 1133–1134 (AH) coordinates CoA. Residue His-1134 is the Proton donor of the active site. The disordered stretch occupies residues 1136 to 1183 (QHNRSAAPSRSTTPAPPMTPVSLAMTSAQERSASTTSMSAAAIQRSKR). Residue 1138–1139 (NR) participates in NADP(+) binding. 2 stretches are compositionally biased toward low complexity: residues 1139 to 1148 (RSAAPSRSTT) and 1167 to 1177 (SASTTSMSAAA).

The protein belongs to the HMG-CoA reductase family.

It is found in the endoplasmic reticulum membrane. It catalyses the reaction (R)-mevalonate + 2 NADP(+) + CoA = (3S)-3-hydroxy-3-methylglutaryl-CoA + 2 NADPH + 2 H(+). It participates in metabolic intermediate biosynthesis; (R)-mevalonate biosynthesis; (R)-mevalonate from acetyl-CoA: step 3/3. Its function is as follows. HMG-CoA reductase; part of the first module of ergosterol biosynthesis pathway that includes the early steps of the pathway, conserved across all eukaryotes, and which results in the formation of mevalonate from acetyl-coenzyme A (acetyl-CoA). In this module, the cytosolic acetyl-CoA acetyltransferase catalyzes the formation of acetoacetyl-CoA. The hydroxymethylglutaryl-CoA synthase then condenses acetyl-CoA with acetoacetyl-CoA to form HMG-CoA. The rate-limiting step of the early module is the reduction to mevalonate by the 3-hydroxy-3-methylglutaryl-coenzyme A (HMG-CoA) reductase HMGR. This is 3-hydroxy-3-methylglutaryl-coenzyme A reductase (HMGR) from Gibberella fujikuroi (strain CBS 195.34 / IMI 58289 / NRRL A-6831) (Bakanae and foot rot disease fungus).